A 431-amino-acid chain; its full sequence is NADH-quinone oxidoreductase subunit D 2 (431 aa).

The disordered stretch occupies residues 1 to 37 (MSEAKGVGGIDPRATPGSAGAGERPPMGTLSPRAGEG).

This sequence belongs to the complex I 49 kDa subunit family. NDH-1 is composed of 14 different subunits. Subunits NuoB, C, D, E, F, and G constitute the peripheral sector of the complex.

Its subcellular location is the cell inner membrane. It catalyses the reaction a quinone + NADH + 5 H(+)(in) = a quinol + NAD(+) + 4 H(+)(out). Functionally, NDH-1 shuttles electrons from NADH, via FMN and iron-sulfur (Fe-S) centers, to quinones in the respiratory chain. The immediate electron acceptor for the enzyme in this species is believed to be ubiquinone. Couples the redox reaction to proton translocation (for every two electrons transferred, four hydrogen ions are translocated across the cytoplasmic membrane), and thus conserves the redox energy in a proton gradient. The chain is NADH-quinone oxidoreductase subunit D 2 from Anaeromyxobacter sp. (strain K).